Here is a 261-residue protein sequence, read N- to C-terminus: CD40 ligand (261 aa).

The Cytoplasmic portion of the chain corresponds to 1-22 (MIETYSQPSPRSVAAGPPVSMK). Residues 23 to 43 (IFMYLLTVFLITQMIGSALFA) form a helical; Signal-anchor for type II membrane protein membrane-spanning segment. Residues 44–240 (AYLHRRLDKI…LQPGASVFVN (197 aa)) are Extracellular-facing. Residues 122–261 (IAAHVISEAS…GFTSFGLLKL (140 aa)) form the THD domain. An intrachain disulfide couples Cys178 to Cys218. The N-linked (GlcNAc...) asparagine glycan is linked to Asn240.

Belongs to the tumor necrosis factor family. In terms of assembly, homotrimer. Interacts with CD28. CD40 ligand, soluble form: Exists as either a monomer or a homotrimer. Forms a ternary complex between CD40 and integrins for CD40-CD40LG signaling. In terms of processing, the soluble form derives from the membrane form by proteolytic processing.

It is found in the cell membrane. The protein localises to the cell surface. Its subcellular location is the secreted. Its function is as follows. Cytokine that acts as a ligand to CD40/TNFRSF5. Costimulates T-cell proliferation and cytokine production. Its cross-linking on T-cells generates a costimulatory signal which enhances the production of IL4 and IL10 in conjunction with the TCR/CD3 ligation and CD28 costimulation. Induces the activation of NF-kappa-B. Induces the activation of kinases MAPK8 and PAK2 in T-cells. Mediates B-cell proliferation in the absence of co-stimulus as well as IgE production in the presence of IL4. Involved in immunoglobulin class switching. Functionally, acts as a ligand for integrins, specifically ITGA5:ITGB1 and ITGAV:ITGB3; both integrins and the CD40 receptor are required for activation of CD40-CD40LG signaling, which have cell-type dependent effects, such as B-cell activation, NF-kappa-B signaling and anti-apoptotic signaling. The chain is CD40 ligand (CD40LG) from Sus scrofa (Pig).